Consider the following 404-residue polypeptide: MSPAQQLTLPAVIVVASVMLLGCEGPPPGTEQIGYRGVGMENYYNKRQRALSIQANQPVESLPAADSTGPKASEVYQNVQVLKDLSVGEFTRTMVAVTTWVSPKEGCNYCHVPGNWASDDIYTKVVSRRMFELVRAANSDWKAHVAETGVTCYTCHRGNPVPKYAWVTDPGPKYPSGLKPTGQNYGSKTVAYASLPFDPLTPFLDQANEIRITGNAALAGSNPASLKQAEWTFGLMMNISDSLGVGCTFCHNTRAFNDWTQSTPKRTTAWYAIRHVRDINQNYIWPLNDVLPASRKGPYGDPLRVSCMTCHQAVNKPLYGAQMAKDYPGLYKTAVTQEALAGSAPASEAAPAAATEAAPEAPAQEVPAAEAVPAAAEPGAAEAAGSVEPAPVEEVAPAPAAQRL.

Residues 1-22 (MSPAQQLTLPAVIVVASVMLLG) form the signal peptide. Residue C23 is the site of N-palmitoyl cysteine attachment. C23 carries the S-diacylglycerol cysteine lipid modification. 16 residues coordinate heme: M94, C107, C110, H111, M130, H144, C152, C155, H156, M236, C247, C250, H251, C307, C310, and H311. Residues 346 to 404 (ASEAAPAAATEAAPEAPAQEVPAAEAVPAAAEPGAAEAAGSVEPAPVEEVAPAPAAQRL) form a disordered region.

As to quaternary structure, component of the photosynthetic reaction center composed of protein subunits L (PufL), M (PufM), H (PuhA) and cytochrome C (PufC). The reaction center interacts with light-harvesting antenna complex LH1. In terms of processing, binds 4 heme groups per subunit.

Its subcellular location is the cellular chromatophore membrane. Functionally, the reaction center of purple bacteria contains a tightly bound cytochrome molecule which re-reduces the photo oxidized primary electron donor. In Thermochromatium tepidum (Chromatium tepidum), this protein is Photosynthetic reaction center cytochrome c subunit.